The sequence spans 478 residues: Ribosomal RNA small subunit methyltransferase F (478 aa).

S-adenosyl-L-methionine is bound by residues 125 to 131 (AAAPGSK), Glu149, Asp176, and Asp194. Cys247 functions as the Nucleophile in the catalytic mechanism.

This sequence belongs to the class I-like SAM-binding methyltransferase superfamily. RsmB/NOP family.

It localises to the cytoplasm. The catalysed reaction is cytidine(1407) in 16S rRNA + S-adenosyl-L-methionine = 5-methylcytidine(1407) in 16S rRNA + S-adenosyl-L-homocysteine + H(+). Its function is as follows. Specifically methylates the cytosine at position 1407 (m5C1407) of 16S rRNA. The protein is Ribosomal RNA small subunit methyltransferase F of Serratia proteamaculans (strain 568).